A 788-amino-acid chain; its full sequence is Endonuclease MutS2 (788 aa).

332–339 (GPNTGGKT) is an ATP binding site. The Smr domain maps to 713–788 (VDLRGMDAEE…GTGVTVVELK (76 aa)).

It belongs to the DNA mismatch repair MutS family. MutS2 subfamily. As to quaternary structure, homodimer. Binds to stalled ribosomes, contacting rRNA.

In terms of biological role, endonuclease that is involved in the suppression of homologous recombination and thus may have a key role in the control of bacterial genetic diversity. Acts as a ribosome collision sensor, splitting the ribosome into its 2 subunits. Detects stalled/collided 70S ribosomes which it binds and splits by an ATP-hydrolysis driven conformational change. Acts upstream of the ribosome quality control system (RQC), a ribosome-associated complex that mediates the extraction of incompletely synthesized nascent chains from stalled ribosomes and their subsequent degradation. Probably generates substrates for RQC. This is Endonuclease MutS2 from Clostridium botulinum (strain ATCC 19397 / Type A).